Reading from the N-terminus, the 174-residue chain is MTTIAAVRKDGVTALAGDGQVTLGEKVIMKGNAQKVRRIYHDQVVIGFAGGVADAFTLQDWFEKKLEHYAGNLRRSAVALAQDWRKDPTLQKLEAMMIVMDEHDLLLVSGSGEVIDPDEDVVAIGSGGNFAQAAAIAMLRHAPDMTPADIAKEAVNIAGNIDIFTNHNVIVESF.

Residue threonine 2 is part of the active site. Residues glycine 159, aspartate 162, and threonine 165 each coordinate Na(+).

The protein belongs to the peptidase T1B family. HslV subfamily. A double ring-shaped homohexamer of HslV is capped on each side by a ring-shaped HslU homohexamer. The assembly of the HslU/HslV complex is dependent on binding of ATP.

It is found in the cytoplasm. The enzyme catalyses ATP-dependent cleavage of peptide bonds with broad specificity.. With respect to regulation, allosterically activated by HslU binding. In terms of biological role, protease subunit of a proteasome-like degradation complex believed to be a general protein degrading machinery. The sequence is that of ATP-dependent protease subunit HslV from Lacticaseibacillus casei (strain BL23) (Lactobacillus casei).